Reading from the N-terminus, the 388-residue chain is Lipid-A-disaccharide synthase (388 aa).

It belongs to the LpxB family.

The catalysed reaction is a lipid X + a UDP-2-N,3-O-bis[(3R)-3-hydroxyacyl]-alpha-D-glucosamine = a lipid A disaccharide + UDP + H(+). Its pathway is bacterial outer membrane biogenesis; LPS lipid A biosynthesis. Condensation of UDP-2,3-diacylglucosamine and 2,3-diacylglucosamine-1-phosphate to form lipid A disaccharide, a precursor of lipid A, a phosphorylated glycolipid that anchors the lipopolysaccharide to the outer membrane of the cell. This Burkholderia pseudomallei (strain K96243) protein is Lipid-A-disaccharide synthase.